The primary structure comprises 269 residues: Putative pyruvate, phosphate dikinase regulatory protein (269 aa).

147-154 (GVSRSSKT) contributes to the ADP binding site.

The protein belongs to the pyruvate, phosphate/water dikinase regulatory protein family. PDRP subfamily.

The enzyme catalyses N(tele)-phospho-L-histidyl/L-threonyl-[pyruvate, phosphate dikinase] + ADP = N(tele)-phospho-L-histidyl/O-phospho-L-threonyl-[pyruvate, phosphate dikinase] + AMP + H(+). It carries out the reaction N(tele)-phospho-L-histidyl/O-phospho-L-threonyl-[pyruvate, phosphate dikinase] + phosphate + H(+) = N(tele)-phospho-L-histidyl/L-threonyl-[pyruvate, phosphate dikinase] + diphosphate. Its function is as follows. Bifunctional serine/threonine kinase and phosphorylase involved in the regulation of the pyruvate, phosphate dikinase (PPDK) by catalyzing its phosphorylation/dephosphorylation. The polypeptide is Putative pyruvate, phosphate dikinase regulatory protein (Trichlorobacter lovleyi (strain ATCC BAA-1151 / DSM 17278 / SZ) (Geobacter lovleyi)).